The primary structure comprises 407 residues: Cation efflux system protein CusB (407 aa).

The first 28 residues, 1–28 (MKKIALIIGSMIAGGIISAAGFTWFAKA), serve as a signal peptide directing secretion.

The protein belongs to the membrane fusion protein (MFP) (TC 8.A.1) family. The cus efflux system is composed of CusA, CusB, CusC and CusF.

Its function is as follows. Part of a cation efflux system that mediates resistance to copper and silver. The polypeptide is Cation efflux system protein CusB (cusB) (Escherichia coli O157:H7).